The following is a 150-amino-acid chain: SsrA-binding protein (150 aa).

Belongs to the SmpB family.

The protein localises to the cytoplasm. Functionally, required for rescue of stalled ribosomes mediated by trans-translation. Binds to transfer-messenger RNA (tmRNA), required for stable association of tmRNA with ribosomes. tmRNA and SmpB together mimic tRNA shape, replacing the anticodon stem-loop with SmpB. tmRNA is encoded by the ssrA gene; the 2 termini fold to resemble tRNA(Ala) and it encodes a 'tag peptide', a short internal open reading frame. During trans-translation Ala-aminoacylated tmRNA acts like a tRNA, entering the A-site of stalled ribosomes, displacing the stalled mRNA. The ribosome then switches to translate the ORF on the tmRNA; the nascent peptide is terminated with the 'tag peptide' encoded by the tmRNA and targeted for degradation. The ribosome is freed to recommence translation, which seems to be the essential function of trans-translation. This Campylobacter curvus (strain 525.92) protein is SsrA-binding protein.